The chain runs to 399 residues: Succinate--CoA ligase [ADP-forming] subunit beta (399 aa).

One can recognise an ATP-grasp domain in the interval 9 to 254 (KQVLAKYGVP…EDEEDPMELE (246 aa)). Residues Lys-46, 53 to 55 (GRG), Glu-109, Cys-112, and Glu-117 contribute to the ATP site. Residues Asn-209 and Asp-223 each contribute to the Mg(2+) site. Residues Asn-274 and 331–333 (GIM) contribute to the substrate site.

It belongs to the succinate/malate CoA ligase beta subunit family. In terms of assembly, heterotetramer of two alpha and two beta subunits. Mg(2+) serves as cofactor.

It catalyses the reaction succinate + ATP + CoA = succinyl-CoA + ADP + phosphate. The enzyme catalyses GTP + succinate + CoA = succinyl-CoA + GDP + phosphate. The protein operates within carbohydrate metabolism; tricarboxylic acid cycle; succinate from succinyl-CoA (ligase route): step 1/1. Succinyl-CoA synthetase functions in the citric acid cycle (TCA), coupling the hydrolysis of succinyl-CoA to the synthesis of either ATP or GTP and thus represents the only step of substrate-level phosphorylation in the TCA. The beta subunit provides nucleotide specificity of the enzyme and binds the substrate succinate, while the binding sites for coenzyme A and phosphate are found in the alpha subunit. The protein is Succinate--CoA ligase [ADP-forming] subunit beta of Rhodospirillum rubrum (strain ATCC 11170 / ATH 1.1.1 / DSM 467 / LMG 4362 / NCIMB 8255 / S1).